Consider the following 141-residue polypeptide: Large-conductance mechanosensitive channel (141 aa).

2 helical membrane-spanning segments follow: residues 16–36 (VVDLAVGVIIGGAFGKIVSSM) and 83–103 (GNFIQTVIDFTILAFVIFLMV).

This sequence belongs to the MscL family. In terms of assembly, homopentamer.

It is found in the cell inner membrane. Its function is as follows. Channel that opens in response to stretch forces in the membrane lipid bilayer. May participate in the regulation of osmotic pressure changes within the cell. The polypeptide is Large-conductance mechanosensitive channel (Cytophaga hutchinsonii (strain ATCC 33406 / DSM 1761 / CIP 103989 / NBRC 15051 / NCIMB 9469 / D465)).